We begin with the raw amino-acid sequence, 123 residues long: Ribosome-binding factor A (123 aa).

It belongs to the RbfA family. In terms of assembly, monomer. Binds 30S ribosomal subunits, but not 50S ribosomal subunits or 70S ribosomes.

It is found in the cytoplasm. Its function is as follows. One of several proteins that assist in the late maturation steps of the functional core of the 30S ribosomal subunit. Associates with free 30S ribosomal subunits (but not with 30S subunits that are part of 70S ribosomes or polysomes). Required for efficient processing of 16S rRNA. May interact with the 5'-terminal helix region of 16S rRNA. The sequence is that of Ribosome-binding factor A from Magnetococcus marinus (strain ATCC BAA-1437 / JCM 17883 / MC-1).